The sequence spans 655 residues: Probable alpha-galactosidase D (655 aa).

The first 16 residues, 1–16 (MASVIALSLLLPAAFA), serve as a signal peptide directing secretion. N-linked (GlcNAc...) asparagine glycans are attached at residues Asn87 and Asn93. A disulfide bridge connects residues Cys126 and Cys153. Asp151 functions as the Nucleophile in the catalytic mechanism. Position 196 to 200 (196 to 200 (EWGID)) interacts with substrate. Catalysis depends on Asp218, which acts as the Proton donor. 5 N-linked (GlcNAc...) asparagine glycosylation sites follow: Asn432, Asn482, Asn502, Asn540, and Asn579.

Belongs to the glycosyl hydrolase 27 family.

It is found in the secreted. The enzyme catalyses Hydrolysis of terminal, non-reducing alpha-D-galactose residues in alpha-D-galactosides, including galactose oligosaccharides, galactomannans and galactolipids.. Its function is as follows. Hydrolyzes a variety of simple alpha-D-galactoside as well as more complex molecules such as oligosaccharides and polysaccharides. The polypeptide is Probable alpha-galactosidase D (aglD) (Aspergillus terreus (strain NIH 2624 / FGSC A1156)).